The chain runs to 415 residues: M protein, serotype 6 (415 aa).

Residues methionine 1–alanine 42 form the signal peptide. 2 coiled-coil regions span residues aspartate 54–isoleucine 133 and glutamate 170–serine 340. Tandem repeats lie at residues methionine 69 to aspartate 75, lysine 76 to lysine 82, and asparagine 83 to lysine 89. The interval methionine 69–lysine 103 is 5 X 7 AA approximate tandem repeats of [KMNR]-L-[TQ]-[TDA]-[ENQ]-N-[NDK]. Polar residues predominate over residues aspartate 75 to aspartate 86. Disordered regions lie at residues aspartate 75 to glutamate 125, glutamine 157 to glutamine 189, aspartate 202 to glutamine 231, and lysine 247 to alanine 277. Basic and acidic residues-rich tracts occupy residues glutamine 87–threonine 100, lysine 108–glutamate 125, and glutamate 158–glutamine 189. The 4; approximate repeat unit spans residues glutamate 90–asparagine 96. The stretch at arginine 97–lysine 103 is repeat 5. 3 C repeats span residues alanine 160–leucine 194, aspartate 202–leucine 236, and aspartate 244–leucine 278. Positions serine 211–glutamate 279 are binding to CD46. The two directly repeated 27 amino acid blocks separated by 15 amino acids stretch occupies residues serine 211 to glutamate 279. Over residues leucine 260–alanine 277 the composition is skewed to basic and acidic residues. A hydrophilic region spans residues glutamate 280 to glutamine 343. D repeat units lie at residues alanine 311–glutamate 316, alanine 317–glutamate 322, alanine 325–glutamate 330, and alanine 332–glycine 337. The segment at alanine 332–threonine 387 is disordered. The LPXTG sorting signal motif lies at leucine 381–glycine 385. Threonine 384 is subject to Pentaglycyl murein peptidoglycan amidated threonine. Positions glycine 385 to asparagine 415 are cleaved as a propeptide — removed by sortase.

It belongs to the M protein family.

It is found in the secreted. Its subcellular location is the cell wall. In terms of biological role, mediates the attachment of S.pyogenes to skin epithelial cells through the binding of the human membrane cofactor protein CD46. Also binds to the factor H and factor H-like protein 1. These interactions could contribute to the fact that the M6 protein protects the bacterium from the phagocytosis by regulating the complement activation on the bacterial surface. The polypeptide is M protein, serotype 6 (emm6) (Streptococcus pyogenes serotype M6 (strain ATCC BAA-946 / MGAS10394)).